Reading from the N-terminus, the 440-residue chain is Chromosome partition protein MukF (440 aa).

The leucine-zipper stretch occupies residues 208 to 236 (LSETSGTLRELQDTLEAAGDKLQANLLRI).

This sequence belongs to the MukF family. In terms of assembly, interacts, and probably forms a ternary complex, with MukE and MukB via its C-terminal region. The complex formation is stimulated by calcium or magnesium. It is required for an interaction between MukE and MukB.

The protein resides in the cytoplasm. The protein localises to the nucleoid. Involved in chromosome condensation, segregation and cell cycle progression. May participate in facilitating chromosome segregation by condensation DNA from both sides of a centrally located replisome during cell division. Not required for mini-F plasmid partitioning. Probably acts via its interaction with MukB and MukE. Overexpression results in anucleate cells. It has a calcium binding activity. The protein is Chromosome partition protein MukF of Escherichia fergusonii (strain ATCC 35469 / DSM 13698 / CCUG 18766 / IAM 14443 / JCM 21226 / LMG 7866 / NBRC 102419 / NCTC 12128 / CDC 0568-73).